Consider the following 502-residue polypeptide: Probable cytochrome P450 514A4 (502 aa).

A helical transmembrane segment spans residues 4 to 24 (IFTIILTITILVLSLILKDLL). Position 448 (Cys448) interacts with heme.

The protein belongs to the cytochrome P450 family. Heme is required as a cofactor.

It localises to the membrane. This is Probable cytochrome P450 514A4 (cyp514A4) from Dictyostelium discoideum (Social amoeba).